The following is an 80-amino-acid chain: Exodeoxyribonuclease 7 small subunit (80 aa).

This sequence belongs to the XseB family. In terms of assembly, heterooligomer composed of large and small subunits.

The protein localises to the cytoplasm. The catalysed reaction is Exonucleolytic cleavage in either 5'- to 3'- or 3'- to 5'-direction to yield nucleoside 5'-phosphates.. Bidirectionally degrades single-stranded DNA into large acid-insoluble oligonucleotides, which are then degraded further into small acid-soluble oligonucleotides. The protein is Exodeoxyribonuclease 7 small subunit of Vibrio campbellii (strain ATCC BAA-1116).